The chain runs to 145 residues: UPF0260 protein VV2402 (145 aa).

The protein belongs to the UPF0260 family.

The polypeptide is UPF0260 protein VV2402 (Vibrio vulnificus (strain YJ016)).